Reading from the N-terminus, the 977-residue chain is Ubiquitin-like modifier-activating enzyme 7 (977 aa).

This sequence belongs to the ubiquitin-activating E1 family. Post-translationally, ubiquitinated by RNF170.

Its subcellular location is the cytoplasm. It localises to the nucleus. The protein operates within protein modification; protein ubiquitination. E1-activating enzyme that catalyzes the covalent conjugation of the ubiquitin-like protein product of ISG15 to additional interferons stimulated proteins (ISGs) as well as other cellular proteins such as P53 in a process termed protein ISGylation. Plays an essential role in antiviral immunity together with ISG15 by restricting the replication of many viruses including rabies virus, influenza virus, sindbis virus or rotavirus. The sequence is that of Ubiquitin-like modifier-activating enzyme 7 from Mus musculus (Mouse).